The sequence spans 180 residues: ATP synthase subunit delta, chloroplastic (180 aa).

Belongs to the ATPase delta chain family. F-type ATPases have 2 components, F(1) - the catalytic core - and F(0) - the membrane proton channel. F(1) has five subunits: alpha(3), beta(3), gamma(1), delta(1), epsilon(1). CF(0) has four main subunits: a(1), b(1), b'(1) and c(10-14). The alpha and beta chains form an alternating ring which encloses part of the gamma chain. F(1) is attached to F(0) by a central stalk formed by the gamma and epsilon chains, while a peripheral stalk is formed by the delta, b and b' chains.

It localises to the plastid. The protein resides in the chloroplast thylakoid membrane. Its function is as follows. F(1)F(0) ATP synthase produces ATP from ADP in the presence of a proton or sodium gradient. F-type ATPases consist of two structural domains, F(1) containing the extramembraneous catalytic core and F(0) containing the membrane proton channel, linked together by a central stalk and a peripheral stalk. During catalysis, ATP synthesis in the catalytic domain of F(1) is coupled via a rotary mechanism of the central stalk subunits to proton translocation. This protein is part of the stalk that links CF(0) to CF(1). It either transmits conformational changes from CF(0) to CF(1) or is implicated in proton conduction. This is ATP synthase subunit delta, chloroplastic from Rhodomonas salina (Cryptomonas salina).